The chain runs to 352 residues: Heat-inducible transcription repressor HrcA (352 aa).

The protein belongs to the HrcA family.

Negative regulator of class I heat shock genes (grpE-dnaK-dnaJ and groELS operons). Prevents heat-shock induction of these operons. This chain is Heat-inducible transcription repressor HrcA, found in Lactobacillus gasseri (strain ATCC 33323 / DSM 20243 / BCRC 14619 / CIP 102991 / JCM 1131 / KCTC 3163 / NCIMB 11718 / NCTC 13722 / AM63).